The chain runs to 512 residues: Anaerobic nitric oxide reductase transcription regulator NorR (512 aa).

The region spanning 190 to 419 (MIGESLAMQE…LEHVISRAAV (230 aa)) is the Sigma-54 factor interaction domain. Residues 218–225 (GETGVGKE) and 281–290 (ADNGTLFLDE) contribute to the ATP site. A DNA-binding region (H-T-H motif) is located at residues 487–506 (WAATARALQLDTGNLHRLAK).

Its pathway is nitrogen metabolism; nitric oxide reduction. Its function is as follows. Required for the expression of anaerobic nitric oxide (NO) reductase, acts as a transcriptional activator for at least the norVW operon. Activation also requires sigma-54. The sequence is that of Anaerobic nitric oxide reductase transcription regulator NorR from Aliivibrio fischeri (strain ATCC 700601 / ES114) (Vibrio fischeri).